We begin with the raw amino-acid sequence, 916 residues long: DNA mismatch repair protein MutS (916 aa).

Residues 1 to 47 (MSEALSVPAAEGENTVTASESPDLAATSARAEKVGKQEKPEKAEKQS) form a disordered region. Over residues 30–45 (RAEKVGKQEKPEKAEK) the composition is skewed to basic and acidic residues. 656-663 (GPNMGGKS) is an ATP binding site. The segment covering 843–861 (ADATPTPQMDLFSAQSSPS) has biased composition (polar residues). The interval 843-880 (ADATPTPQMDLFSAQSSPSADDEDDKSAGQSAVPPAQA) is disordered.

It belongs to the DNA mismatch repair MutS family.

Its function is as follows. This protein is involved in the repair of mismatches in DNA. It is possible that it carries out the mismatch recognition step. This protein has a weak ATPase activity. This chain is DNA mismatch repair protein MutS, found in Cupriavidus metallidurans (strain ATCC 43123 / DSM 2839 / NBRC 102507 / CH34) (Ralstonia metallidurans).